Here is a 130-residue protein sequence, read N- to C-terminus: Small ribosomal subunit protein uS9 (130 aa).

The protein belongs to the universal ribosomal protein uS9 family.

The polypeptide is Small ribosomal subunit protein uS9 (Aliivibrio salmonicida (strain LFI1238) (Vibrio salmonicida (strain LFI1238))).